A 317-amino-acid chain; its full sequence is Transaldolase (317 aa).

Lys132 acts as the Schiff-base intermediate with substrate in catalysis.

This sequence belongs to the transaldolase family. Type 1 subfamily. As to quaternary structure, homodimer.

Its subcellular location is the cytoplasm. The catalysed reaction is D-sedoheptulose 7-phosphate + D-glyceraldehyde 3-phosphate = D-erythrose 4-phosphate + beta-D-fructose 6-phosphate. The protein operates within carbohydrate degradation; pentose phosphate pathway; D-glyceraldehyde 3-phosphate and beta-D-fructose 6-phosphate from D-ribose 5-phosphate and D-xylulose 5-phosphate (non-oxidative stage): step 2/3. In terms of biological role, transaldolase is important for the balance of metabolites in the pentose-phosphate pathway. In Haemophilus influenzae (strain 86-028NP), this protein is Transaldolase.